The following is a 106-amino-acid chain: Protein translation factor SUI1 homolog (106 aa).

This sequence belongs to the SUI1 family.

This Methanopyrus kandleri (strain AV19 / DSM 6324 / JCM 9639 / NBRC 100938) protein is Protein translation factor SUI1 homolog.